We begin with the raw amino-acid sequence, 153 residues long: Small heat shock protein HspB (153 aa).

A sHSP domain is found at 30-140 (AGTEDNYPPC…KPRRISISGS (111 aa)).

Belongs to the small heat shock protein (HSP20) family.

The polypeptide is Small heat shock protein HspB (hspB) (Bradyrhizobium diazoefficiens (strain JCM 10833 / BCRC 13528 / IAM 13628 / NBRC 14792 / USDA 110)).